The primary structure comprises 361 residues: WAT1-related protein At4g01450 (361 aa).

Helical transmembrane passes span 8 to 28 (WAPM…NALV), 40 to 60 (VIAT…AYFW), 76 to 96 (LFVS…LGLS), 103 to 123 (GSAF…IFGF), 132 to 152 (IGYG…LLTM), 177 to 197 (WIKG…WMLI), 209 to 229 (YSST…LSLI), 243 to 263 (LTII…TVGM), 273 to 293 (VVSS…DFLI), and 298 to 318 (IYLG…IFLW). EamA domains are found at residues 21–142 (AGMV…GTLI) and 194–317 (WMLI…YIFL).

This sequence belongs to the drug/metabolite transporter (DMT) superfamily. Plant drug/metabolite exporter (P-DME) (TC 2.A.7.4) family.

It is found in the membrane. In Arabidopsis thaliana (Mouse-ear cress), this protein is WAT1-related protein At4g01450.